The sequence spans 78 residues: Large ribosomal subunit protein bL28 (78 aa).

Positions 1–21 (MARVCQVTGKGPMTGNNVSHA) are disordered.

Belongs to the bacterial ribosomal protein bL28 family.

The chain is Large ribosomal subunit protein bL28 from Bordetella petrii (strain ATCC BAA-461 / DSM 12804 / CCUG 43448).